We begin with the raw amino-acid sequence, 431 residues long: MENKSNSQILFAEAQQYIPGGVNSPVRAFKSVGQEFPRFIKFAKGAYLYDVDWNKYIDYIGSWGPMILGHCDDDVLEAIQCQVKNGLSYGAPCKQEVDLAKKIIELMPNIEQVRFVNSGTEATISAIRLARAYTCRNKIIKFEGCYHGHADEFLVAAGSGALSLGQPNSPGVPEDVVKDTLVASFNDMESIQALFEKYKDEIACIIVEPIAGNMNMIFPQDGFLAKLRAICDQNSSLLIFDEVMTGFRVALGGAQSIYNVKPDLTTLGKVIGGGMPVGAFGGRKEIMQKVSPAGPVYQAGTLSGNPIAMTAGIKTLEKISQPGFFDELGAKAQKLVDGLNEAAKAYDFNFHAKCLGGMFGLFFCSDKIAVNTFVDLGKTNLKMFNQFFAYMLDNGVYLAPSAYEAGFISIAHSDEDIEKTICLAKKFFQEN.

Lys269 carries the N6-(pyridoxal phosphate)lysine modification.

The protein belongs to the class-III pyridoxal-phosphate-dependent aminotransferase family. HemL subfamily. As to quaternary structure, homodimer. Requires pyridoxal 5'-phosphate as cofactor.

The protein localises to the cytoplasm. It carries out the reaction (S)-4-amino-5-oxopentanoate = 5-aminolevulinate. It functions in the pathway porphyrin-containing compound metabolism; protoporphyrin-IX biosynthesis; 5-aminolevulinate from L-glutamyl-tRNA(Glu): step 2/2. The polypeptide is Glutamate-1-semialdehyde 2,1-aminomutase (Francisella tularensis subsp. holarctica (strain FTNF002-00 / FTA)).